Here is a 166-residue protein sequence, read N- to C-terminus: NAD(P)H-quinone oxidoreductase subunit I, chloroplastic (166 aa).

2 consecutive 4Fe-4S ferredoxin-type domains span residues 55–84 (GRIH…VDWK) and 95–124 (LNYS…MTEE). Residues cysteine 64, cysteine 67, cysteine 70, cysteine 74, cysteine 104, cysteine 107, cysteine 110, and cysteine 114 each coordinate [4Fe-4S] cluster.

Belongs to the complex I 23 kDa subunit family. In terms of assembly, NDH is composed of at least 16 different subunits, 5 of which are encoded in the nucleus. [4Fe-4S] cluster is required as a cofactor.

It localises to the plastid. The protein resides in the chloroplast thylakoid membrane. It catalyses the reaction a plastoquinone + NADH + (n+1) H(+)(in) = a plastoquinol + NAD(+) + n H(+)(out). The enzyme catalyses a plastoquinone + NADPH + (n+1) H(+)(in) = a plastoquinol + NADP(+) + n H(+)(out). NDH shuttles electrons from NAD(P)H:plastoquinone, via FMN and iron-sulfur (Fe-S) centers, to quinones in the photosynthetic chain and possibly in a chloroplast respiratory chain. The immediate electron acceptor for the enzyme in this species is believed to be plastoquinone. Couples the redox reaction to proton translocation, and thus conserves the redox energy in a proton gradient. In Laphamia lindheimeri (Lindheimer's rockdaisy), this protein is NAD(P)H-quinone oxidoreductase subunit I, chloroplastic.